The chain runs to 275 residues: Small ribosomal subunit protein uS2 (275 aa).

Residues 244-275 (REGAEASKKKATVKKKAAPRAASGESAEAAAE) are disordered. Basic residues predominate over residues 252–261 (KKATVKKKAA). The span at 262–275 (PRAASGESAEAAAE) shows a compositional bias: low complexity.

It belongs to the universal ribosomal protein uS2 family.

The protein is Small ribosomal subunit protein uS2 of Thioalkalivibrio sulfidiphilus (strain HL-EbGR7).